A 317-amino-acid polypeptide reads, in one-letter code: Probable cell division protein WhiA (317 aa).

Residues serine 278–glutamine 311 constitute a DNA-binding region (H-T-H motif).

The protein belongs to the WhiA family.

Functionally, involved in cell division and chromosome segregation. The chain is Probable cell division protein WhiA from Lachnospira eligens (strain ATCC 27750 / DSM 3376 / VPI C15-48 / C15-B4) (Eubacterium eligens).